The following is a 415-amino-acid chain: Levansucrase (415 aa).

Residues Trp45, Asp46, Ala132, Arg202, and Asp203 each coordinate sucrose. Residue Asp46 is the Nucleophile of the active site. Glu287 serves as the catalytic Proton donor/acceptor.

Belongs to the glycosyl hydrolase 68 family.

It is found in the secreted. It carries out the reaction [6)-beta-D-fructofuranosyl-(2-&gt;](n) alpha-D-glucopyranoside + sucrose = [6)-beta-D-fructofuranosyl-(2-&gt;](n+1) alpha-D-glucopyranoside + D-glucose. Functionally, catalyzes the synthesis of levan, a fructose polymer, by transferring the fructosyl moiety from sucrose to a growing acceptor molecule. This is Levansucrase from Erwinia amylovora (Fire blight bacteria).